The following is a 1371-amino-acid chain: Serine protease pic autotransporter (1371 aa).

Residues 1–55 (MNKVYSLKYCPVTGGLIVVSELASRVIKKTCRRLTHILLAGIPAVYLYYPQISQA) form the signal peptide. One can recognise a Peptidase S6 domain in the interval 56-301 (GIVRSDIAYQ…NVIPTDYLNQ (246 aa)). Residues H127, D155, and S258 each act as charge relay system in the active site. Residues 1105–1371 (DTNGDAGAWA…AVNANFRYMF (267 aa)) form the Autotransporter domain.

Post-translationally, cleaved to release the mature protein from the outer membrane.

It localises to the periplasm. The protein localises to the secreted. Its subcellular location is the cell surface. The protein resides in the cell outer membrane. Functionally, involved in virulence of uropathogenic E.coli although it is not known how it contributes to it. Has no mucinase activity. The polypeptide is Serine protease pic autotransporter (pic) (Escherichia coli O6:H1 (strain CFT073 / ATCC 700928 / UPEC)).